The sequence spans 109 residues: Irditoxin subunit A (109 aa).

A signal peptide spans 1-19 (MKTLLLAVAVVAFVCLGSA). Positions 20–34 (DQLGLGRQQIDWGQG) are excised as a propeptide. Q35 bears the Pyrrolidone carboxylic acid mark. Disulfide bonds link C44–C66, C47–C55, C61–C85, C89–C100, and C101–C106.

The protein belongs to the three-finger toxin family. Ancestral subfamily. Boigatoxin sub-subfamily. As to quaternary structure, heterodimer of A and B chains; disulfide-linked. Expressed by the venom gland.

It is found in the secreted. In terms of biological role, this bird and reptile-specific postsynaptic neurotoxin inhibits the chick muscle alpha-1-beta-1-gamma-delta (CHRNA1-CHRNB1-CHRNG-CHNRD) nicotinic acetylcholine receptor (nAChR) 100-fold more compared with the mouse receptor. In vivo, produces rapid flaccid paralysis, dyspnea and increased respiratory rate in geckos. At sublethal doses geckos were immobilized for up to three days and then recovered. Chicks injected with lethal doses showed rapid onset of inactivity, dyspnea and neck droop, and no extended paralysis with survival was seen. This is Irditoxin subunit A from Boiga irregularis (Brown tree snake).